The sequence spans 290 residues: Oxaloacetate decarboxylase (290 aa).

Residue serine 53 participates in substrate binding. Aspartate 91 contacts Mg(2+). Residues arginine 162 and histidine 238 each contribute to the substrate site.

Belongs to the isocitrate lyase/PEP mutase superfamily. Oxaloacetate decarboxylase family. In terms of assembly, homotetramer; dimer of dimers. It depends on Mg(2+) as a cofactor.

It carries out the reaction oxaloacetate + H(+) = pyruvate + CO2. Catalyzes the decarboxylation of oxaloacetate into pyruvate. Seems to play a role in maintaining cellular concentrations of bicarbonate and pyruvate. This is Oxaloacetate decarboxylase from Ectopseudomonas mendocina (strain ymp) (Pseudomonas mendocina).